Consider the following 156-residue polypeptide: ATP synthase subunit b (156 aa).

A helical transmembrane segment spans residues 12-32 (VAFFIFVLFCMKFVWPPVIAA).

The protein belongs to the ATPase B chain family. In terms of assembly, F-type ATPases have 2 components, F(1) - the catalytic core - and F(0) - the membrane proton channel. F(1) has five subunits: alpha(3), beta(3), gamma(1), delta(1), epsilon(1). F(0) has three main subunits: a(1), b(2) and c(10-14). The alpha and beta chains form an alternating ring which encloses part of the gamma chain. F(1) is attached to F(0) by a central stalk formed by the gamma and epsilon chains, while a peripheral stalk is formed by the delta and b chains.

The protein localises to the cell inner membrane. F(1)F(0) ATP synthase produces ATP from ADP in the presence of a proton or sodium gradient. F-type ATPases consist of two structural domains, F(1) containing the extramembraneous catalytic core and F(0) containing the membrane proton channel, linked together by a central stalk and a peripheral stalk. During catalysis, ATP synthesis in the catalytic domain of F(1) is coupled via a rotary mechanism of the central stalk subunits to proton translocation. Its function is as follows. Component of the F(0) channel, it forms part of the peripheral stalk, linking F(1) to F(0). The polypeptide is ATP synthase subunit b (Pseudomonas syringae pv. syringae (strain B728a)).